A 212-amino-acid polypeptide reads, in one-letter code: General odorant-binding protein 68 (212 aa).

A signal peptide spans 1–28; sequence MATTIARIGSANWAKLLVLLWLVQLATA. 3 disulfides stabilise this stretch: cysteine 64–cysteine 85, cysteine 80–cysteine 152, and cysteine 130–cysteine 162.

This sequence belongs to the PBP/GOBP family.

It localises to the secreted. In terms of biological role, present in the aqueous fluid surrounding olfactory sensory dendrites and are thought to aid in the capture and transport of hydrophobic odorants into and through this fluid. This chain is General odorant-binding protein 68 (Obp68), found in Anopheles gambiae (African malaria mosquito).